The chain runs to 217 residues: 7-cyano-7-deazaguanine synthase (217 aa).

An ATP-binding site is contributed by 10–20 (FSGGQDSTTCL). Residues C185, C194, C197, and C200 each coordinate Zn(2+).

This sequence belongs to the QueC family. Homodimer. Requires Zn(2+) as cofactor.

The enzyme catalyses 7-carboxy-7-deazaguanine + NH4(+) + ATP = 7-cyano-7-deazaguanine + ADP + phosphate + H2O + H(+). It participates in purine metabolism; 7-cyano-7-deazaguanine biosynthesis. Catalyzes the ATP-dependent conversion of 7-carboxy-7-deazaguanine (CDG) to 7-cyano-7-deazaguanine (preQ(0)). This Streptococcus thermophilus (strain ATCC BAA-491 / LMD-9) protein is 7-cyano-7-deazaguanine synthase.